Here is a 206-residue protein sequence, read N- to C-terminus: MARYIGATCRLCRREGMKLFLKGDRCYTDKCAFARRSYAPGQHGQGRKKLSNYGVQLREKQKARRIYGILEAQFRKYYEKAETMRGITGENLLKLLEMRLDNVVYKLGFGSSRAEARQLVTHGHFLVNGKKVDIISYQVSAGDVISVREKSRGTEKFKTFAENPKTLPAWLEGNIENFEGKVIAEPTRADIDVPVNETLIVELYSK.

The 67-residue stretch at 98–164 (MRLDNVVYKL…EKFKTFAENP (67 aa)) folds into the S4 RNA-binding domain.

This sequence belongs to the universal ribosomal protein uS4 family. As to quaternary structure, part of the 30S ribosomal subunit. Contacts protein S5. The interaction surface between S4 and S5 is involved in control of translational fidelity.

One of the primary rRNA binding proteins, it binds directly to 16S rRNA where it nucleates assembly of the body of the 30S subunit. In terms of biological role, with S5 and S12 plays an important role in translational accuracy. In Clostridium novyi (strain NT), this protein is Small ribosomal subunit protein uS4A.